The chain runs to 129 residues: MYDNLKSLGITQPEDVDRYSLRQEANNDILKIYFRKDKGEFFAKSVKFKYPRQRKTVVADNAGHGYKEINEINPNLRYVIDELDQLCKRDQVEVDLKRKILDDLRHLESVVTNKIAEIEADLEKLTSGR.

It belongs to the UPF0325 family.

This Yersinia enterocolitica serotype O:8 / biotype 1B (strain NCTC 13174 / 8081) protein is UPF0325 protein YE3288.